We begin with the raw amino-acid sequence, 406 residues long: MAVNLTEKTAEQLPDIDGIALYTAQAGVKKPGHTDLTLIAVAAGSTVGAVFTTNRFCAAPVHIAKSHLFDEDGVRALVINTGNANAGTGAQGRIDALAVCAAAARQIGCKPNQVLPFSTGVILEPLPADKIIAALPKMQPAFWNEAARAIMTTDTVPKAASREGKVGDKHTVRATGIAKGSGMIHPNMATMLGFIATDAKVSQPVLQLMTQEIADETFNTITVDGDTSTNDSFVIIATGKNSQSEIDNIADPRYAQLKELLCSLALELAQAIVRDGEGATKFITVRVENAKTRDEARQAAYAVARSPLVKTAFFASDPNLGRLLAAIGYAGVADLDTDLVEMYLDDILVAEHGGRAASYTEAQGQAVMSKAEITVRIKLHRGQAAATVYTCDLSHGYVSINADYRS.

Thr152, Lys179, Thr190, Glu277, Asn401, and Ser406 together coordinate substrate. Thr190 functions as the Nucleophile in the catalytic mechanism.

This sequence belongs to the ArgJ family. Heterotetramer of two alpha and two beta chains.

The protein resides in the cytoplasm. It carries out the reaction N(2)-acetyl-L-ornithine + L-glutamate = N-acetyl-L-glutamate + L-ornithine. The catalysed reaction is L-glutamate + acetyl-CoA = N-acetyl-L-glutamate + CoA + H(+). It participates in amino-acid biosynthesis; L-arginine biosynthesis; L-ornithine and N-acetyl-L-glutamate from L-glutamate and N(2)-acetyl-L-ornithine (cyclic): step 1/1. The protein operates within amino-acid biosynthesis; L-arginine biosynthesis; N(2)-acetyl-L-ornithine from L-glutamate: step 1/4. Its function is as follows. Catalyzes two activities which are involved in the cyclic version of arginine biosynthesis: the synthesis of N-acetylglutamate from glutamate and acetyl-CoA as the acetyl donor, and of ornithine by transacetylation between N(2)-acetylornithine and glutamate. The sequence is that of Arginine biosynthesis bifunctional protein ArgJ from Neisseria meningitidis serogroup A / serotype 4A (strain DSM 15465 / Z2491).